We begin with the raw amino-acid sequence, 466 residues long: Keratin, type II cytoskeletal 7 (466 aa).

Ser-2 is subject to N-acetylserine. Phosphoserine is present on residues Ser-2 and Ser-7. The interval 2 to 91 (SLHFGSQVFS…DPSIQQVRQE (90 aa)) is head. Ser-12 carries an O-linked (GlcNAc) serine glycan. The residue at position 20 (Arg-20) is a Dimethylated arginine; alternate. Arg-20 is modified (omega-N-methylarginine; alternate). Phosphoserine occurs at positions 54, 72, and 84. Residues 91-127 (EEREQIKTLNNKFASFIDKVRFLEQQNKLLETKWALL) form a coil 1A region. The region spanning 92–404 (EREQIKTLNN…KLLEGEESRL (313 aa)) is the IF rod domain. At Thr-98 the chain carries Phosphothreonine. A linker 1 region spans residues 128 to 145 (QEQKSAKSNRLPGIFEAQ). Lys-131 is covalently cross-linked (Glycyl lysine isopeptide (Lys-Gly) (interchain with G-Cter in SUMO2)). Residues 146-237 (IAGLRKQLEA…TLYEQELKEL (92 aa)) are coil 1B. Lys-180 bears the N6-acetyllysine mark. A linker 12 region spans residues 238 to 261 (QSEVSDTSVVLSMDNNRSLDLDSI). Ser-255 carries the post-translational modification Phosphoserine. The tract at residues 262-400 (IAEVKAQYEE…ATYRKLLEGE (139 aa)) is coil 2. Residues Lys-266 and Lys-287 each participate in a glycyl lysine isopeptide (Lys-Gly) (interchain with G-Cter in SUMO2) cross-link. The residue at position 290 (Thr-290) is a Phosphothreonine. Residues Lys-297 and Lys-332 each participate in a glycyl lysine isopeptide (Lys-Gly) (interchain with G-Cter in SUMO2) cross-link. The tail stretch occupies residues 401 to 466 (ESRLTGDGVG…TSATSRSPRK (66 aa)).

The protein belongs to the intermediate filament family. In terms of assembly, heterotetramer of two type I and two type II keratins. Interacts with eukaryotic translation initiator factor 3 (eIF3) subunit EIF3S10. Interacts with GPER1. Post-translationally, arg-20 is dimethylated, probably to asymmetric dimethylarginine.

Blocks interferon-dependent interphase and stimulates DNA synthesis in cells. This Bos taurus (Bovine) protein is Keratin, type II cytoskeletal 7.